A 497-amino-acid polypeptide reads, in one-letter code: MALWQQGQKLYLPPTPVSKVLCSETYVQRKSIFYHAETERLLTVGHPYYQVTVGDKTVPKVSANQFRVFKIQLPDPNQFALPDRTVHNPSKERLVWAVIGVQVSRGQPLGGTVTGHPTFNALLDAENVNRKVTAQTTDDRKQTGLDAKQQQILLLGCTPAEGEYWTTARPCVTDRLENGACPPLELKNKHIEDGDMMEIGFGAADFKTLNASKSDLPLDIQNEICLYPDYLKMAEDAAGNSMFFFARKEQVYVRHIWTRGGSEKEAPSKDFYLKNGRGEETLKIPSVHFGSPSGSLVSTDNQIFNRPYWLFRAQGMNNGIAWNNLLFLTVGDNTRGTNLSISVAADGNALSEYDTGKFNLYHRHMEEYKLAFILELCSVEITAQTLSHLQGLMPSVLQNWEIGVQPPASSILEDTYRYIESPATKCASNVIPPKEDPYAGLKFWSIDLKEKLSLDLDQFPLGRRFLAQQGAGCSTVRKRAVATRNSSKPAKRKKIKA.

Belongs to the papillomaviridae L1 protein family. Self-assembles into homopentamers. The capsid has an icosahedral symmetry and consists of 72 capsomers, with each capsomer being a pentamer of L1. Interacts with the minor capsid protein L2; this interaction is necessary for viral genome encapsidation. Interacts with protein E2; this interaction enhances E2-dependent replication and transcription activation.

The protein resides in the virion. It localises to the host nucleus. Functionally, forms an icosahedral capsid with a T=7 symmetry and a 50 nm diameter. The capsid is composed of 72 pentamers linked to each other by disulfide bonds and associated with L2 proteins. Binds to heparan sulfate proteoglycans on cell surface of basal layer keratinocytes to provide initial virion attachment. This binding mediates a conformational change in the virus capsid that facilitates efficient infection. The virion enters the host cell via endocytosis. During virus trafficking, L1 protein dissociates from the viral DNA and the genomic DNA is released to the host nucleus. The virion assembly takes place within the cell nucleus. Encapsulates the genomic DNA together with protein L2. In Bos taurus papillomavirus 2 (Bovine papillomavirus 2), this protein is Major capsid protein L1.